Reading from the N-terminus, the 467-residue chain is MTKIASVANILKGKITVGETVTVRGWIRTRRDSKAGLSFLAIYDGSCFDPIQAIVNNDIENYETEILRLTTGCSVVVTGKIAESPAEGQAVELQANKIEVSGWVDDPETYPMSAKRHSIEYLREVAHLRPRTNIIGAVARVRHCLAQAIHRFFHEQGFYWVATPLITASDTEGAGEMFRVSTLDLENLPRTDKGAVDFSQDFFGKESFLTVSGQLNGESYACALSKIYTFGPTFRAENSNTTRHLAEFWMVEPEIAFATLADNAKLAEDMLKYVFRAVLNEREDDLKFFEKHVDKNVITRLKDFINSDFAQIDYTDAIDILLKSGKAFEFPVSWGIDLSSEHERYLAEEYFKSPVVVKNYPKDIKAFYMRLNDDGKTVAAMDVLAPGIGEIIGGSQREERLEVLDKRIAEMGLKAEDYWWYRDLRRYGTVPHAGFGLGFERLIVYVTGVQNIRDVIPFPRTPRNANF.

The protein belongs to the class-II aminoacyl-tRNA synthetase family. As to quaternary structure, homodimer.

The protein localises to the cytoplasm. It carries out the reaction tRNA(Asn) + L-asparagine + ATP = L-asparaginyl-tRNA(Asn) + AMP + diphosphate + H(+). The polypeptide is Asparagine--tRNA ligase (Histophilus somni (strain 129Pt) (Haemophilus somnus)).